A 283-amino-acid chain; its full sequence is Formamidopyrimidine-DNA glycosylase (283 aa).

Residue proline 2 is the Schiff-base intermediate with DNA of the active site. Glutamate 3 serves as the catalytic Proton donor. Lysine 61 serves as the catalytic Proton donor; for beta-elimination activity. The DNA site is built by histidine 94, arginine 113, and lysine 159. Residues 245–279 form an FPG-type zinc finger; that stretch reads DAYGREGESCRRCGAVMRREKFMNRSSFYCPKCQP. Catalysis depends on arginine 269, which acts as the Proton donor; for delta-elimination activity.

This sequence belongs to the FPG family. As to quaternary structure, monomer. It depends on Zn(2+) as a cofactor.

The catalysed reaction is Hydrolysis of DNA containing ring-opened 7-methylguanine residues, releasing 2,6-diamino-4-hydroxy-5-(N-methyl)formamidopyrimidine.. The enzyme catalyses 2'-deoxyribonucleotide-(2'-deoxyribose 5'-phosphate)-2'-deoxyribonucleotide-DNA = a 3'-end 2'-deoxyribonucleotide-(2,3-dehydro-2,3-deoxyribose 5'-phosphate)-DNA + a 5'-end 5'-phospho-2'-deoxyribonucleoside-DNA + H(+). Involved in base excision repair of DNA damaged by oxidation or by mutagenic agents. Acts as a DNA glycosylase that recognizes and removes damaged bases. Has a preference for oxidized purines, such as 7,8-dihydro-8-oxoguanine (8-oxoG). Has AP (apurinic/apyrimidinic) lyase activity and introduces nicks in the DNA strand. Cleaves the DNA backbone by beta-delta elimination to generate a single-strand break at the site of the removed base with both 3'- and 5'-phosphates. This is Formamidopyrimidine-DNA glycosylase from Mycolicibacterium paratuberculosis (strain ATCC BAA-968 / K-10) (Mycobacterium paratuberculosis).